The following is a 63-amino-acid chain: Small ribosomal subunit protein eS17 (63 aa).

This sequence belongs to the eukaryotic ribosomal protein eS17 family.

In Haloarcula marismortui (strain ATCC 43049 / DSM 3752 / JCM 8966 / VKM B-1809) (Halobacterium marismortui), this protein is Small ribosomal subunit protein eS17 (rps17e).